Consider the following 83-residue polypeptide: Small ribosomal subunit protein bS16 (83 aa).

This sequence belongs to the bacterial ribosomal protein bS16 family.

The polypeptide is Small ribosomal subunit protein bS16 (Magnetococcus marinus (strain ATCC BAA-1437 / JCM 17883 / MC-1)).